The sequence spans 35 residues: Hemocyanin A chain (35 aa).

Belongs to the tyrosinase family. Hemocyanin subfamily. Hemolymph.

It localises to the secreted. The protein resides in the extracellular space. In terms of biological role, hemocyanins are copper-containing oxygen carriers occurring freely dissolved in the hemolymph of many mollusks and arthropods. The polypeptide is Hemocyanin A chain (Cherax destructor (Common yabby crayfish)).